The primary structure comprises 118 residues: D-dopachrome decarboxylase (118 aa).

P2 carries the post-translational modification N-acetylproline. The residue at position 33 (K33) is an N6-acetyllysine.

This sequence belongs to the MIF family. Homotrimer. As to expression, highly expressed in the liver and at lower levels in the heart, lung and pancreas.

It localises to the cytoplasm. The catalysed reaction is D-dopachrome + H(+) = 5,6-dihydroxyindole + CO2. Tautomerization of D-dopachrome with decarboxylation to give 5,6-dihydroxyindole (DHI). The chain is D-dopachrome decarboxylase (DDT) from Homo sapiens (Human).